Consider the following 144-residue polypeptide: Large ribosomal subunit protein uL15 (144 aa).

The segment at 1 to 55 is disordered; it reads MQLNELKPVAGSRFKRLRKGRGLSSGHGFTSGRGTKGQKAHGKTRLGFEGGQMPL. Residues 23–35 are compositionally biased toward gly residues; sequence LSSGHGFTSGRGT.

It belongs to the universal ribosomal protein uL15 family. Part of the 50S ribosomal subunit.

Its function is as follows. Binds to the 23S rRNA. In Limosilactobacillus fermentum (strain NBRC 3956 / LMG 18251) (Lactobacillus fermentum), this protein is Large ribosomal subunit protein uL15.